A 261-amino-acid polypeptide reads, in one-letter code: Pantothenate synthetase (261 aa).

Position 29-36 (29-36 (MGALHNGH)) interacts with ATP. Residue His36 is the Proton donor of the active site. Position 60 (Gln60) interacts with (R)-pantoate. Gln60 contacts beta-alanine. An ATP-binding site is contributed by 147–150 (GEKD). Gln153 contacts (R)-pantoate. 184-187 (LSSR) is a binding site for ATP.

It belongs to the pantothenate synthetase family. Homodimer.

The protein localises to the cytoplasm. It carries out the reaction (R)-pantoate + beta-alanine + ATP = (R)-pantothenate + AMP + diphosphate + H(+). The protein operates within cofactor biosynthesis; (R)-pantothenate biosynthesis; (R)-pantothenate from (R)-pantoate and beta-alanine: step 1/1. Catalyzes the condensation of pantoate with beta-alanine in an ATP-dependent reaction via a pantoyl-adenylate intermediate. The chain is Pantothenate synthetase from Francisella tularensis subsp. tularensis (strain FSC 198).